We begin with the raw amino-acid sequence, 622 residues long: MSFKVNWNSLETEPLTNWTKELLTSALNSGKSPNILASNITIKDLNFGKIAPDFEILEIGELDRDRFRGIFKIDYQGDFHLTLHTKVQANPLNIYYHNSLEKEVCNYSQDEFITPNFLLSNEQFAIPLDLKLSDIKINGIGIIVFSKSKGLTLVFRNDPLDSIKVSSTFDTVQVLANFLQKQIENQIRDLFRETLPTLIHQLSLKYLSLDNNINEIKSKLSQQDSVSMTNNELASSLKLFDDEENEFPLIYSSKNLQKNMQLFKSRETFRLSVPKFKNIVQRTRLDKFTKSYPNLLNSLYANNADLQHRFVNNINHGHNNNSNTSSNGIPIELLVSHDDKQHYDKTDDLLKDISSIQANNFYKYSNKDAPNKPKRRRIKVHKKSKAKQDDNTVKASELQNVDSTFMDSRSISPQETIDTTSTLIESAPMTRNVSTNIKSPTLETMSTGSSSSASSQVIAHPTPKRAYQPADTTVSTTTINKENHIDYIKARNLYQDFIQMSQSPGYYDKVISNGGGIGLGNSGGNYFGFNGNGNGLERTMSASPIKHLNKDKKSINYIDTSKINEKLNQFRLDGGKNSANTNNSSGGKNFRPGFTRNESNGQQGILFEAFNFPSVAPPPPYC.

Residues 1-204 enclose the SMP-LTD domain; the sequence is MSFKVNWNSL…LPTLIHQLSL (204 aa). 3 disordered regions span residues 364–393, 442–468, and 572–592; these read YSNK…DNTV, LETM…RAYQ, and LDGG…NFRP. The span at 372-385 shows a compositional bias: basic residues; the sequence is KPKRRRIKVHKKSK. The span at 446 to 455 shows a compositional bias: low complexity; that stretch reads STGSSSSASS. Positions 577 to 587 are enriched in polar residues; that stretch reads NSANTNNSSGG.

It belongs to the MDM34 family. As to quaternary structure, component of the ER-mitochondria encounter structure (ERMES) or MDM complex, composed of MMM1, MDM10, MDM12 and MDM34.

Its subcellular location is the mitochondrion outer membrane. Component of the ERMES/MDM complex, which serves as a molecular tether to connect the endoplasmic reticulum (ER) and mitochondria. Components of this complex are involved in the control of mitochondrial shape and protein biogenesis, and function in nonvesicular lipid trafficking between the ER and mitochondria. MDM34 is required for the interaction of the ER-resident membrane protein MMM1 and the outer mitochondrial membrane-resident beta-barrel protein MDM10. The polypeptide is Mitochondrial distribution and morphology protein 34 (Candida albicans (strain WO-1) (Yeast)).